The sequence spans 300 residues: uncharacterized protein (300 aa).

This is an uncharacterized protein from Bradyrhizobium diazoefficiens (strain JCM 10833 / BCRC 13528 / IAM 13628 / NBRC 14792 / USDA 110).